Here is a 122-residue protein sequence, read N- to C-terminus: Ribosome-binding factor A (122 aa).

This sequence belongs to the RbfA family. In terms of assembly, monomer. Binds 30S ribosomal subunits, but not 50S ribosomal subunits or 70S ribosomes.

The protein localises to the cytoplasm. Functionally, one of several proteins that assist in the late maturation steps of the functional core of the 30S ribosomal subunit. Associates with free 30S ribosomal subunits (but not with 30S subunits that are part of 70S ribosomes or polysomes). Required for efficient processing of 16S rRNA. May interact with the 5'-terminal helix region of 16S rRNA. This Albidiferax ferrireducens (strain ATCC BAA-621 / DSM 15236 / T118) (Rhodoferax ferrireducens) protein is Ribosome-binding factor A.